We begin with the raw amino-acid sequence, 332 residues long: Alpha-N-acetylgalactosaminide alpha-2,6-sialyltransferase 6 (332 aa).

The tract at residues 1-26 is disordered; it reads MACPRPLSQCDHTPLPGPPAGHWPLP. Residues 1 to 42 lie on the Cytoplasmic side of the membrane; that stretch reads MACPRPLSQCDHTPLPGPPAGHWPLPLSRRRREMKSNKEQRS. Residues 43-63 form a helical; Signal-anchor for type II membrane protein membrane-spanning segment; that stretch reads AVFVILFALITILILYSSSSA. Residues 64–332 lie on the Lumenal side of the membrane; it reads NEVFHYGSLR…GITFSHPSWT (269 aa). Asn97 is a glycosylation site (N-linked (GlcNAc...) asparagine). A disulfide bridge links Cys107 with Cys255.

It belongs to the glycosyltransferase 29 family.

Its subcellular location is the golgi apparatus membrane. It catalyses the reaction a ganglioside GM1b (d18:1(4E)) + CMP-N-acetyl-beta-neuraminate = a ganglioside GD1alpha (d18:1(4E)) + CMP + H(+). The catalysed reaction is N-acetyl-alpha-neuraminosyl-(2-&gt;3)-beta-D-galactosyl-(1-&gt;3)-N-acetyl-beta-D-glucosaminyl-(1-&gt;3)-beta-D-galactosyl-(1-&gt;4)-beta-D-glucosyl-(1&lt;-&gt;1')-N-acyl-sphing-4-enine + CMP-N-acetyl-beta-neuraminate = N-acetyl-alpha-neuraminosyl-(2-&gt;3)-beta-D-galactosyl-(1-&gt;3)-[N-acetyl-alpha-neuraminosyl-(2-&gt;6)]-N-acetyl-beta-D-glucosaminyl-(1-&gt;3)-beta-D-galactosyl-(1-&gt;4)-beta-D-glucosyl-(1&lt;-&gt;1')-N-acyl-sphing-4-enine + CMP + H(+). It carries out the reaction a globoside MSGG + CMP-N-acetyl-beta-neuraminate = a globoside DSGG + CMP + H(+). The enzyme catalyses a ganglioside GD1a (d18:1(4E)) + CMP-N-acetyl-beta-neuraminate = a ganglioside GT1aalpha (d18:1(4E)) + CMP + H(+). It catalyses the reaction a ganglioside GT1b (d18:1(4E)) + CMP-N-acetyl-beta-neuraminate = a ganglioside GQ1balpha (d18:1(4E)) + CMP + H(+). The catalysed reaction is 3-O-[alpha-Neu5Ac-(2-&gt;3)-beta-D-Gal-(1-&gt;3)-alpha-D-GalNAc]-L-Ser-[protein] + CMP-N-acetyl-beta-neuraminate = a 3-O-{alpha-Neu5Ac-(2-&gt;3)-beta-D-Gal-(1-&gt;3)-[alpha-Neu5Ac-(2-&gt;6)]-alpha-D-GalNAc}-L-seryl-[protein] + CMP + H(+). It carries out the reaction 3-O-[alpha-Neu5Ac-(2-&gt;3)-beta-D-Gal-(1-&gt;3)-alpha-D-GalNAc]-L-Thr-[protein] + CMP-N-acetyl-beta-neuraminate = a 3-O-{alpha-Neu5Ac-(2-&gt;3)-beta-D-Gal-(1-&gt;3)-[alpha-Neu5Ac-(2-&gt;6)]-alpha-D-GalNAc}-L-threonyl-[protein] + CMP + H(+). Functionally, transfers the sialyl group (N-acetyl-alpha-neuraminyl or NeuAc) from CMP-NeuAc onto glycoproteins and glycolipids, forming an alpha-2,6-linkage. Produces branched type disialyl structures by transfer of a sialyl group onto the GalNAc or GlcNAc residue inside backbone core chains having a terminal sialic acid with an alpha-2,3-linkage on Gal. ST6GalNAcVI prefers glycolipids to glycoproteins, predominantly catalyzing the biosynthesis of ganglioside GD1alpha from GM1b. Besides GMb1, MSGG and other glycolipids, it shows activity towards sialyl Lc4Cer generating disialyl Lc4Cer, which can lead to the synthesis of disialyl Lewis a (Le(a)), suggested to be a cancer-associated antigen. Also has activity toward GD1a and GT1b, and can generate DSGG (disialylgalactosylgloboside) from MSGG (monosialylgalactosylgloboside). The polypeptide is Alpha-N-acetylgalactosaminide alpha-2,6-sialyltransferase 6 (ST6GALNAC6) (Bos taurus (Bovine)).